We begin with the raw amino-acid sequence, 226 residues long: Thiopurine S-methyltransferase (226 aa).

S-adenosyl-L-methionine is bound by residues tryptophan 16, methionine 51, glutamate 72, and arginine 131.

Belongs to the class I-like SAM-binding methyltransferase superfamily. TPMT family.

It is found in the cytoplasm. The enzyme catalyses S-adenosyl-L-methionine + a thiopurine = S-adenosyl-L-homocysteine + a thiopurine S-methylether.. This chain is Thiopurine S-methyltransferase, found in Francisella tularensis subsp. tularensis (strain SCHU S4 / Schu 4).